The sequence spans 122 residues: Large ribosomal subunit protein uL14 (122 aa).

It belongs to the universal ribosomal protein uL14 family. As to quaternary structure, part of the 50S ribosomal subunit. Forms a cluster with proteins L3 and L19. In the 70S ribosome, L14 and L19 interact and together make contacts with the 16S rRNA in bridges B5 and B8.

Functionally, binds to 23S rRNA. Forms part of two intersubunit bridges in the 70S ribosome. The chain is Large ribosomal subunit protein uL14 from Borreliella afzelii (strain PKo) (Borrelia afzelii).